The chain runs to 112 residues: Conotoxin vil14.4 (112 aa).

A signal peptide spans 1–22 (MGFRVLVLVVMATTSALPFTFF). Residues 23–85 (EEPGRSPFRP…FAELSVGQRR (63 aa)) constitute a propeptide that is removed on maturation. Cystine bridges form between cysteine 91–cysteine 111 and cysteine 95–cysteine 107.

Belongs to the conotoxin R superfamily. In terms of tissue distribution, expressed by the venom duct.

The protein localises to the secreted. This Conus villepinii (Villepin's cone) protein is Conotoxin vil14.4.